Consider the following 184-residue polypeptide: Large ribosomal subunit protein uL15 (184 aa).

Positions 1 to 62 are disordered; the sequence is MDLSSLRPAK…QMPMYRRLPK (62 aa). The span at 21–35 shows a compositional bias: gly residues; the sequence is RGPGSGNGTTAGKGN.

Belongs to the universal ribosomal protein uL15 family. Part of the 50S ribosomal subunit.

Binds to the 23S rRNA. This is Large ribosomal subunit protein uL15 from Chlorobaculum parvum (strain DSM 263 / NCIMB 8327) (Chlorobium vibrioforme subsp. thiosulfatophilum).